The chain runs to 338 residues: ABC transporter I family member 6, chloroplastic (338 aa).

The N-terminal 66 residues, 1–66 (MAGVNLQLRH…RTTRRSVIVS (66 aa)), are a transit peptide targeting the chloroplast. The 247-residue stretch at 92-338 (LEVRDLRAVI…EKEGYKAISG (247 aa)) folds into the ABC transporter domain. An ATP-binding site is contributed by 126–133 (GKNGSGKS).

It belongs to the ABC transporter superfamily. ABCI family. Interacts with NAP6. Present in all organs, with higher levels in aerial parts.

The protein resides in the plastid. The protein localises to the chloroplast. Its function is as follows. Essential protein. Required during embryo development, especially at early stages. Involved in chloroplast differentiation. The sequence is that of ABC transporter I family member 6, chloroplastic (ABCI6) from Arabidopsis thaliana (Mouse-ear cress).